A 589-amino-acid polypeptide reads, in one-letter code: BTB/POZ domain and ankyrin repeat-containing protein NPR3 (589 aa).

The disordered stretch occupies residues 1-25; sequence METSTISFSSSSPPSPPPPQPAPGD. Positions 13-22 are enriched in pro residues; the sequence is PPSPPPPQPA. The region spanning 52–137 is the BTB domain; the sequence is AEIVLASGGG…LYTGRLRSAP (86 aa). The segment at 140–154 adopts a C2HC NPR-type zinc-finger fold; it reads AAACLDDGCSHDACR. 4 residues coordinate Zn(2+): cysteine 143, cysteine 148, histidine 150, and cysteine 153. ANK repeat units lie at residues 260-290, 292-319, and 323-352; these read KRVR…TLDD, FAIH…NVNL, and SGYT…SVLE. A salicylic acid-binding core (SBC) region spans residues 382 to 521; that stretch reads ERSKAYLCIG…LDKFLNEEST (140 aa). A salicylate-binding site is contributed by arginine 433. A disordered region spans residues 555–589; the sequence is DKAAGAAISSSTSASSSPRYETKLRPGNKKGKLSR. Low complexity predominate over residues 558 to 571; that stretch reads AGAAISSSTSASSS. The span at 580-589 shows a compositional bias: basic residues; the sequence is PGNKKGKLSR.

This sequence belongs to the plant 'ANKYRIN-BTB/POZ' family. 'NPR1-like' subfamily. As to quaternary structure, interacts with TGA2.1, TGA2.2, TGA2.3, LG2, TGAL1, TGAL4, NRR, RH1, RH2 and RH3.

It is found in the nucleus. It participates in protein modification; protein ubiquitination. In terms of biological role, salicylic acid (SA)-binding substrate-specific adapter of an E3 ubiquitin-protein ligase complex (CUL3-RBX1-BTB) which mediates the ubiquitination and subsequent proteasomal degradation of target proteins. Involved in defense response against the bacterial blight disease caused by Xanthomonas oryzae pv. oryzae (Xoo). Plants expressing an NPR3/NH3 transgene driven by its native promoter show enhanced resistance to the Xoo pathogen, and exhibit elevated sensitivity to benzothiadiazole (BTH) treatment and enhanced induction of defense-related genes upon treatment with BTH. Intriguingly, constitutive over-expression of NPR3/NH3 with a ubiquitin promoter does not confer disease resistance to Xoo. The sequence is that of BTB/POZ domain and ankyrin repeat-containing protein NPR3 from Oryza sativa subsp. japonica (Rice).